The chain runs to 112 residues: DNA-binding protein TON_1102 (112 aa).

The protein belongs to the PDCD5 family.

The polypeptide is DNA-binding protein TON_1102 (Thermococcus onnurineus (strain NA1)).